A 68-amino-acid polypeptide reads, in one-letter code: Large ribosomal subunit protein bL33c (68 aa).

It belongs to the bacterial ribosomal protein bL33 family.

Its subcellular location is the plastid. It localises to the chloroplast. The sequence is that of Large ribosomal subunit protein bL33c from Pinus koraiensis (Korean pine).